Here is a 595-residue protein sequence, read N- to C-terminus: Elongation factor 4 (595 aa).

In terms of domain architecture, tr-type G spans 2–184 (ETIRNFSIIA…TITHNIPYPK (183 aa)). Residues 14-19 (DHGKST) and 131-134 (NKID) each bind GTP.

The protein belongs to the TRAFAC class translation factor GTPase superfamily. Classic translation factor GTPase family. LepA subfamily.

Its subcellular location is the cell membrane. It catalyses the reaction GTP + H2O = GDP + phosphate + H(+). Its function is as follows. Required for accurate and efficient protein synthesis under certain stress conditions. May act as a fidelity factor of the translation reaction, by catalyzing a one-codon backward translocation of tRNAs on improperly translocated ribosomes. Back-translocation proceeds from a post-translocation (POST) complex to a pre-translocation (PRE) complex, thus giving elongation factor G a second chance to translocate the tRNAs correctly. Binds to ribosomes in a GTP-dependent manner. The chain is Elongation factor 4 from Buchnera aphidicola subsp. Baizongia pistaciae (strain Bp).